The chain runs to 54 residues: Large ribosomal subunit protein bL32c (54 aa).

The protein belongs to the bacterial ribosomal protein bL32 family.

It localises to the plastid. The protein resides in the chloroplast. This chain is Large ribosomal subunit protein bL32c, found in Gossypium barbadense (Sea Island cotton).